Consider the following 995-residue polypeptide: Serine-aspartate repeat-containing protein C (995 aa).

The N-terminal stretch at 1 to 50 is a signal peptide; that stretch reads MNNKKTATNRKGMIPNRLNKFSIRKYSVGTASILVGTTLIFGLSGHEAKA. The YSIRK-G/S signaling motif motif lies at 21–32; that stretch reads FSIRKYSVGTAS. Positions 51 to 164 are disordered; that stretch reads AEHTNGELNQ…STTPKTTTIK (114 aa). The interval 51–495 is ligand binding A region; that stretch reads AEHTNGELNQ…GSSTANGDQK (445 aa). The segment covering 56-71 has biased composition (polar residues); the sequence is GELNQSKNETTAPSEN. Positions 72-83 are enriched in basic and acidic residues; the sequence is KTTKKVDSRQLK. The span at 84-155 shows a compositional bias: polar residues; that stretch reads DNTQTATADQ…SNLTQAKDVS (72 aa). CNA-B domains follow at residues 496-606 and 607-717; these read KYNL…YKTP and KYSL…EEET. Positions 678–975 are disordered; it reads TQTGTNTTED…NNSNNGTLFG (298 aa). Acidic residues-rich tracts occupy residues 685 to 695 and 712 to 934; these read TEDDKDADGGE and YYEE…DSDS. The LPXTG sorting signal signature appears at 958 to 962; the sequence is LPETG. Residues 960-975 are compositionally biased toward low complexity; sequence ETGSENNNSNNGTLFG. T961 carries the pentaglycyl murein peptidoglycan amidated threonine modification. Residues 962–995 constitute a propeptide, removed by sortase; sequence GSENNNSNNGTLFGGLFAALGSLLLFGRRKKQNK.

This sequence belongs to the serine-aspartate repeat-containing protein (SDr) family. As to quaternary structure, homodimerizes; via N2-Domain. Interacts with host NRXN1; this interaction mediates bacterial attachment to host cells.

It is found in the secreted. The protein resides in the cell wall. Cell surface-associated calcium-binding protein which plays an important role in adhesion and pathogenesis. Mediates interactions with components of the extracellular matrix such as host NRXN1 to promote bacterial adhesion. In Staphylococcus aureus (strain NCTC 8325 / PS 47), this protein is Serine-aspartate repeat-containing protein C (sdrC).